The sequence spans 253 residues: Sec-independent protein translocase protein TatC (253 aa).

Helical transmembrane passes span Ile-19–Pro-39, Phe-70–Phe-90, Ile-109–Leu-129, Phe-154–Phe-174, and Phe-194–Met-214.

Belongs to the TatC family. In terms of assembly, forms a complex with TatA.

Its subcellular location is the cell membrane. Its function is as follows. Part of the twin-arginine translocation (Tat) system that transports large folded proteins containing a characteristic twin-arginine motif in their signal peptide across membranes. The chain is Sec-independent protein translocase protein TatC from Halalkalibacterium halodurans (strain ATCC BAA-125 / DSM 18197 / FERM 7344 / JCM 9153 / C-125) (Bacillus halodurans).